The sequence spans 122 residues: Small ribosomal subunit protein uS13 (122 aa).

A disordered region spans residues 99–122; that stretch reads RGQRTHTNARTRKGPAKAIAGKKK.

Belongs to the universal ribosomal protein uS13 family. As to quaternary structure, part of the 30S ribosomal subunit. Forms a loose heterodimer with protein S19. Forms two bridges to the 50S subunit in the 70S ribosome.

Its function is as follows. Located at the top of the head of the 30S subunit, it contacts several helices of the 16S rRNA. In the 70S ribosome it contacts the 23S rRNA (bridge B1a) and protein L5 of the 50S subunit (bridge B1b), connecting the 2 subunits; these bridges are implicated in subunit movement. Contacts the tRNAs in the A and P-sites. This Rhodopseudomonas palustris (strain TIE-1) protein is Small ribosomal subunit protein uS13.